A 458-amino-acid polypeptide reads, in one-letter code: Ammonium transporter Rh type B (458 aa).

The Cytoplasmic portion of the chain corresponds to 1-13 (MAGSPSRAAGRRL). The chain crosses the membrane as a helical span at residues 14-34 (QLPLLCLFLQGATAVLFAVFV). Topologically, residues 35 to 61 (RYNHKTDAALWHRSNHSNADNEFYFRY) are extracellular. N-linked (GlcNAc...) asparagine glycosylation is present at Asn49. A helical membrane pass occupies residues 62–82 (PSFQDVHAMVFVGFGFLMVFL). Over 83–86 (QRYG) the chain is Cytoplasmic. Residues 87–107 (FSSVGFTFLLAAFALQWSTLV) form a helical membrane-spanning segment. Residues 108 to 124 (QGFLHSFHGGHIHVGVE) are Extracellular-facing. A helical transmembrane segment spans residues 125–145 (SMINADFCAGAVLISFGAVLG). Topologically, residues 146 to 149 (KTGP) are cytoplasmic. Residues 150-170 (AQLLLMALLEVVLFGINEFVL) traverse the membrane as a helical segment. At 171 to 178 (LHLLGVRD) the chain is on the extracellular side. The chain crosses the membrane as a helical span at residues 179 to 201 (AGGSMTIHTFGAYFGLVLSRVLY). The Cytoplasmic portion of the chain corresponds to 202-219 (RPQLEKSKHRQGSVYHSD). Residues 220 to 240 (LFAMIGTIFLWIFWPSFNAAL) form a helical membrane-spanning segment. The Extracellular portion of the chain corresponds to 241 to 251 (TALGAGQHRTA). A helical membrane pass occupies residues 252 to 272 (LNTYYSLAASTLGTFALSALV). Topologically, residues 273–282 (GEDGRLDMVH) are cytoplasmic. The helical transmembrane segment at 283 to 303 (IQNAALAGGVVVGTSSEMMLT) threads the bilayer. Residue Pro304 is a topological domain, extracellular. A helical membrane pass occupies residues 305-325 (FGALTAGFLAGTVSTLGYKFF). Residues 326–346 (RPILESKFKVQDTCGVHNLHG) are Cytoplasmic-facing. Residues 347-367 (MPGVLGALLGVLVAGLATHEA) traverse the membrane as a helical segment. At 368–393 (YGDGLESVFPLIAEGQRSATSQAMHQ) the chain is on the extracellular side. A helical transmembrane segment spans residues 394 to 414 (LFGLFVTLMFASVGGGLGGLL). The Cytoplasmic portion of the chain corresponds to 415–458 (LKLPFLDSPPDSQCYEDQVHWQVPGEHEDKAQRPLRVEEADTQA). The tract at residues 416–424 (KLPFLDSPP) is interaction with ANK3. The Basolateral sorting signal motif lies at 429–432 (YEDQ). The interval 439–458 (GEHEDKAQRPLRVEEADTQA) is disordered.

It belongs to the ammonium transporter (TC 2.A.49) family. Rh subfamily. Interacts (via C-terminus) with ANK2 and ANK3; required for targeting to the basolateral membrane. N-glycosylated.

The protein resides in the cell membrane. Its subcellular location is the basolateral cell membrane. It carries out the reaction NH4(+)(in) = NH4(+)(out). The enzyme catalyses methylamine(out) = methylamine(in). It catalyses the reaction CO2(out) = CO2(in). In terms of biological role, ammonium transporter involved in the maintenance of acid-base homeostasis. Transports ammonium and its related derivative methylammonium across the basolateral plasma membrane of epithelial cells likely contributing to renal transepithelial ammonia transport and ammonia metabolism. May transport either NH4(+) or NH3 ammonia species predominantly mediating an electrogenic NH4(+) transport. May act as a CO2 channel providing for renal acid secretion. The polypeptide is Ammonium transporter Rh type B (RHBG) (Pan troglodytes (Chimpanzee)).